The following is a 152-amino-acid chain: Protein SprT-like (152 aa).

Positions 13–148 constitute a SprT-like domain; sequence NYVKKVSIED…FACGYCHGRL (136 aa). A Zn(2+)-binding site is contributed by His-72. Glu-73 is an active-site residue. Position 76 (His-76) interacts with Zn(2+).

It belongs to the SprT family. Requires Zn(2+) as cofactor.

Its subcellular location is the cytoplasm. This is Protein SprT-like from Streptococcus agalactiae serotype III (strain NEM316).